The chain runs to 429 residues: Serine--tRNA ligase (429 aa).

229 to 231 (TAE) provides a ligand contact to L-serine. 260-262 (RSE) lines the ATP pocket. Glu283 is a binding site for L-serine. 347–350 (EISS) contacts ATP. Ser383 contacts L-serine.

This sequence belongs to the class-II aminoacyl-tRNA synthetase family. Type-1 seryl-tRNA synthetase subfamily. Homodimer. The tRNA molecule binds across the dimer.

It localises to the cytoplasm. It carries out the reaction tRNA(Ser) + L-serine + ATP = L-seryl-tRNA(Ser) + AMP + diphosphate + H(+). The catalysed reaction is tRNA(Sec) + L-serine + ATP = L-seryl-tRNA(Sec) + AMP + diphosphate + H(+). It functions in the pathway aminoacyl-tRNA biosynthesis; selenocysteinyl-tRNA(Sec) biosynthesis; L-seryl-tRNA(Sec) from L-serine and tRNA(Sec): step 1/1. Catalyzes the attachment of serine to tRNA(Ser). Is also able to aminoacylate tRNA(Sec) with serine, to form the misacylated tRNA L-seryl-tRNA(Sec), which will be further converted into selenocysteinyl-tRNA(Sec). In Orientia tsutsugamushi (strain Boryong) (Rickettsia tsutsugamushi), this protein is Serine--tRNA ligase.